Here is a 561-residue protein sequence, read N- to C-terminus: Urocanate hydratase (561 aa).

Residues 52-53, glutamine 130, 176-178, glutamate 196, arginine 201, 242-243, 263-267, 273-274, and tyrosine 322 each bind NAD(+); these read GG, GMG, NA, QTSAH, and YL. Cysteine 410 is an active-site residue. Glycine 492 is a binding site for NAD(+).

It belongs to the urocanase family. The cofactor is NAD(+).

It localises to the cytoplasm. It carries out the reaction 4-imidazolone-5-propanoate = trans-urocanate + H2O. Its pathway is amino-acid degradation; L-histidine degradation into L-glutamate; N-formimidoyl-L-glutamate from L-histidine: step 2/3. Catalyzes the conversion of urocanate to 4-imidazolone-5-propionate. In Salmonella gallinarum (strain 287/91 / NCTC 13346), this protein is Urocanate hydratase.